Reading from the N-terminus, the 527-residue chain is MTTSTNIHDQRILILDFGSQYTQLIARRIREIGVYCELWSWDVDEADIRDFNPNGIILSGGPESVTGDESPRAPQYVFEAGVPVFGVCYGMQTMAEQLGGKVAGSSMREFGYAQVEIVEPTSFFKNIEDAVAEDGNGLLDVWMSHGDKVVEIPSDFVKVAQTDTCPFAAIANEEKHFYGVQFHPEVTHTRQGMRIIENFVLNICGCENLWTSANIIEDAIANIKEQVGDDEVILGLSGGVDSSVVAMLLHRAIGDKLTCVFVDNGLLRLNEGEQVMDMFGDHFGLNIVHVKAEDRFLNALAGENDPEAKRKIIGHAFIDVFDEESKKLKNAKWLAQGTIYPDVIESAASKNGKAHVIKSHHNVGGLPDDMEMGLVEPLRELFKDEVRKIGLELGLPYNMLYRHPFPGPGLGVRVLGEVKKEYCDLLRRADAIFIEELHSADLYNKVSQAFTVFLPVRSVGVMGDGRKYDWVVSLRAVETIDFMTAHWAHLPYDFLGKVSNRIINEVDGISRVVYDISGKPPATIEWE.

The Glutamine amidotransferase type-1 domain maps to Arg-11–Leu-209. The active-site Nucleophile is Cys-88. Residues His-183 and Glu-185 contribute to the active site. The GMPS ATP-PPase domain maps to Trp-210–Arg-402. Ser-237 to Ser-243 is a binding site for ATP.

In terms of assembly, homodimer.

The enzyme catalyses XMP + L-glutamine + ATP + H2O = GMP + L-glutamate + AMP + diphosphate + 2 H(+). It functions in the pathway purine metabolism; GMP biosynthesis; GMP from XMP (L-Gln route): step 1/1. Its function is as follows. Catalyzes the synthesis of GMP from XMP. This is GMP synthase [glutamine-hydrolyzing] from Photobacterium profundum (strain SS9).